Consider the following 284-residue polypeptide: Protoheme IX farnesyltransferase (284 aa).

Transmembrane regions (helical) follow at residues 13–33 (VTVL…TGYP), 35–55 (LTVI…SFIL), 84–104 (FALL…TYFI), 106–126 (LLTA…YTIW), 134–154 (NIVI…AAMA), 163–183 (VMFL…AIFL), 205–225 (VNQI…FYFV), 229–249 (MGYL…GFAY), and 264–284 (FFFS…DSKI).

It belongs to the UbiA prenyltransferase family. Protoheme IX farnesyltransferase subfamily.

The protein localises to the cell inner membrane. The enzyme catalyses heme b + (2E,6E)-farnesyl diphosphate + H2O = Fe(II)-heme o + diphosphate. It functions in the pathway porphyrin-containing compound metabolism; heme O biosynthesis; heme O from protoheme: step 1/1. Its function is as follows. Converts heme B (protoheme IX) to heme O by substitution of the vinyl group on carbon 2 of heme B porphyrin ring with a hydroxyethyl farnesyl side group. The polypeptide is Protoheme IX farnesyltransferase (Leptospira biflexa serovar Patoc (strain Patoc 1 / Ames)).